The sequence spans 104 residues: L-rhamnose mutarotase (104 aa).

Y18 is a substrate binding site. The active-site Proton donor is the H22. Substrate-binding positions include Y41 and 76–77 (WW).

The protein belongs to the rhamnose mutarotase family. In terms of assembly, homodimer.

The protein localises to the cytoplasm. The catalysed reaction is alpha-L-rhamnose = beta-L-rhamnose. Its pathway is carbohydrate metabolism; L-rhamnose metabolism. In terms of biological role, involved in the anomeric conversion of L-rhamnose. The polypeptide is L-rhamnose mutarotase (Burkholderia ambifaria (strain MC40-6)).